Reading from the N-terminus, the 353-residue chain is Photosystem II D2 protein (353 aa).

Residue threonine 2 is modified to N-acetylthreonine. Threonine 2 is subject to Phosphothreonine. Residues 41–61 form a helical membrane-spanning segment; sequence CAYFALGGWFTGTTFVTSWYT. Residue histidine 118 participates in chlorophyll a binding. A helical transmembrane segment spans residues 125–141; the sequence is GFMLRQFELARSVQLRP. Pheophytin a contacts are provided by glutamine 130 and asparagine 143. A helical membrane pass occupies residues 153–166; it reads VFVSVFLIYPLGQS. Position 198 (histidine 198) interacts with chlorophyll a. The chain crosses the membrane as a helical span at residues 208–228; that stretch reads AALLCAIHGATVENTLFEDGD. Residues histidine 215 and phenylalanine 262 each contribute to the a plastoquinone site. Histidine 215 is a Fe cation binding site. Residue histidine 269 participates in Fe cation binding. A helical membrane pass occupies residues 279 to 295; the sequence is GLWMSALGVVGLALNLR.

This sequence belongs to the reaction center PufL/M/PsbA/D family. In terms of assembly, PSII is composed of 1 copy each of membrane proteins PsbA, PsbB, PsbC, PsbD, PsbE, PsbF, PsbH, PsbI, PsbJ, PsbK, PsbL, PsbM, PsbT, PsbX, PsbY, PsbZ, Psb30/Ycf12, at least 3 peripheral proteins of the oxygen-evolving complex and a large number of cofactors. It forms dimeric complexes. It depends on The D1/D2 heterodimer binds P680, chlorophylls that are the primary electron donor of PSII, and subsequent electron acceptors. It shares a non-heme iron and each subunit binds pheophytin, quinone, additional chlorophylls, carotenoids and lipids. There is also a Cl(-1) ion associated with D1 and D2, which is required for oxygen evolution. The PSII complex binds additional chlorophylls, carotenoids and specific lipids. as a cofactor.

It is found in the plastid. Its subcellular location is the chloroplast thylakoid membrane. The catalysed reaction is 2 a plastoquinone + 4 hnu + 2 H2O = 2 a plastoquinol + O2. Photosystem II (PSII) is a light-driven water:plastoquinone oxidoreductase that uses light energy to abstract electrons from H(2)O, generating O(2) and a proton gradient subsequently used for ATP formation. It consists of a core antenna complex that captures photons, and an electron transfer chain that converts photonic excitation into a charge separation. The D1/D2 (PsbA/PsbD) reaction center heterodimer binds P680, the primary electron donor of PSII as well as several subsequent electron acceptors. D2 is needed for assembly of a stable PSII complex. The sequence is that of Photosystem II D2 protein from Coffea arabica (Arabian coffee).